The sequence spans 295 residues: Sulfotransferase 1E1 (295 aa).

Position 48–53 (48–53) interacts with 3'-phosphoadenylyl sulfate; that stretch reads KSGTTW. Substrate is bound at residue 106–108; sequence KTH. The active-site Proton acceptor is the His-108. The 3'-phosphoadenylyl sulfate site is built by Arg-130 and Ser-138. Position 156 is a phosphoserine (Ser-156). Residues Tyr-193, 227-232, and 257-259 contribute to the 3'-phosphoadenylyl sulfate site; these read TSFQEM and RKG.

It belongs to the sulfotransferase 1 family. Homodimer. In terms of tissue distribution, testis and at very low level in the placenta.

It localises to the cytoplasm. The protein resides in the cytosol. It catalyses the reaction estrone + 3'-phosphoadenylyl sulfate = estrone 3-sulfate + adenosine 3',5'-bisphosphate + H(+). The enzyme catalyses 17beta-estradiol + 3'-phosphoadenylyl sulfate = 17beta-estradiol 3-sulfate + adenosine 3',5'-bisphosphate + H(+). The catalysed reaction is (24S)-hydroxycholesterol + 3'-phosphoadenylyl sulfate = (24S)-hydroxycholesterol 3-sulfate + adenosine 3',5'-bisphosphate + H(+). It carries out the reaction 3beta-hydroxyandrost-5-en-17-one + 3'-phosphoadenylyl sulfate = dehydroepiandrosterone 3-sulfate + adenosine 3',5'-bisphosphate + H(+). It catalyses the reaction 4-ethylphenol + 3'-phosphoadenylyl sulfate = 4-ethylphenyl sulfate + adenosine 3',5'-bisphosphate + H(+). Its activity is regulated as follows. Inhibited by estradiol. Its function is as follows. Sulfotransferase that utilizes 3'-phospho-5'-adenylyl sulfate (PAPS) as sulfonate donor to catalyze the sulfate conjugation of estradiol and estrone. Is a key enzyme in estrogen homeostasis, the sulfation of estrogens leads to their inactivation. Also sulfates dehydroepiandrosterone, pregnenolone, (24S)-hydroxycholesterol and xenobiotic compounds like ethinylestradiol, equalenin, diethyl stilbesterol and 1-naphthol at significantly lower efficiency. Does not sulfonate cortisol, testosterone and dopamine. May play a role in gut microbiota-host metabolic interaction. O-sulfonates 4-ethylphenol (4-EP), a dietary tyrosine-derived metabolite produced by gut bacteria. The product 4-EPS crosses the blood-brain barrier and may negatively regulate oligodendrocyte maturation and myelination, affecting the functional connectivity of different brain regions associated with the limbic system. This is Sulfotransferase 1E1 (Sult1e1) from Mus musculus (Mouse).